The following is a 587-amino-acid chain: Monocopper oxidase-like protein SKU5 (587 aa).

The N-terminal stretch at Met1 to Ala20 is a signal peptide. N-linked (GlcNAc...) asparagine glycans are attached at residues Asn14 and Asn58. His80 contacts Cu cation. 10 N-linked (GlcNAc...) asparagine glycosylation sites follow: Asn107, Asn169, Asn200, Asn257, Asn278, Asn293, Asn342, Asn362, Asn430, and Asn444. A Cu cation-binding site is contributed by His452. An N-linked (GlcNAc...) asparagine glycan is attached at Asn534. A lipid anchor (GPI-anchor amidated serine) is attached at Ser562. The propeptide at Ala563–His587 is removed in mature form.

Belongs to the multicopper oxidase family. Cu cation serves as cofactor. Expressed in roots, hypocotyls, cotyledons, leaves, stems and flowers.

It is found in the secreted. Its subcellular location is the cell wall. It localises to the cell membrane. In terms of biological role, may be a monocopper oxidase of unknown specificity. Involved in directional growth processes, possibly by participating in cell wall expansion. The polypeptide is Monocopper oxidase-like protein SKU5 (SKU5) (Arabidopsis thaliana (Mouse-ear cress)).